Reading from the N-terminus, the 278-residue chain is uncharacterized protein (278 aa).

Residues 127 to 151 are compositionally biased toward pro residues; it reads PPTPSPPPPPAPTQPTRPTPGPAFF. Residues 127 to 174 are disordered; it reads PPTPSPPPPPAPTQPTRPTPGPAFFPQPFKVELHHPTPKTSSLPAPSL. Low complexity predominate over residues 164-174; the sequence is PKTSSLPAPSL.

This is an uncharacterized protein from Botryotinia fuckeliana (Noble rot fungus).